Here is a 452-residue protein sequence, read N- to C-terminus: UPF0210 protein Cthe_0410 (452 aa).

Belongs to the UPF0210 family. As to quaternary structure, homodimer.

The protein is UPF0210 protein Cthe_0410 of Acetivibrio thermocellus (strain ATCC 27405 / DSM 1237 / JCM 9322 / NBRC 103400 / NCIMB 10682 / NRRL B-4536 / VPI 7372) (Clostridium thermocellum).